We begin with the raw amino-acid sequence, 455 residues long: DNA repair protein RadA (455 aa).

The segment at 11-28 (CVGCGYVHPKWLGRCPEC) adopts a C4-type zinc-finger fold. Residue 97-104 (GEPGIGKS) coordinates ATP. Positions 250 to 254 (KNRFG) match the RadA KNRFG motif motif. The tract at residues 350–455 (DIYVNVAGGI…IAEIFSKAKA (106 aa)) is lon-protease-like.

It belongs to the RecA family. RadA subfamily.

DNA-dependent ATPase involved in processing of recombination intermediates, plays a role in repairing DNA breaks. Stimulates the branch migration of RecA-mediated strand transfer reactions, allowing the 3' invading strand to extend heteroduplex DNA faster. Binds ssDNA in the presence of ADP but not other nucleotides, has ATPase activity that is stimulated by ssDNA and various branched DNA structures, but inhibited by SSB. Does not have RecA's homology-searching function. The polypeptide is DNA repair protein RadA (Treponema pallidum (strain Nichols)).